The primary structure comprises 811 residues: Protein kinase C-binding protein NELL2a (811 aa).

Residues 1–18 form the signal peptide; the sequence is MAFLQLFVGLLCGAAVSA. The Laminin G-like domain occupies 54–225; that stretch reads AFMFQGSSRS…TQCPDLNRTC (172 aa). N-linked (GlcNAc...) asparagine glycans are attached at residues N222, N290, and N295. One can recognise a VWFC 1 domain in the interval 269 to 328; it reads RTCRVKDQIYREEQSWTDGCKNCTCSNGTVRCEKILCPPLDCPDGTTPAYVTGTCCKECQ. In terms of domain architecture, EGF-like 1 spans 395–437; sequence GHDFCAEENICSENSDCVNLDAGASCGCKNGFRPLRLDSAYCE. 3 disulfide bridges follow: C399-C411, C405-C420, and C422-C436. Ca(2+) is bound by residues D438, I439, and E441. Residues 438–479 form the EGF-like 2; calcium-binding domain; the sequence is DIDECAEGRHYCRENTECVNTAGSFMCVCHTGFIRIDDYSCT. Cystine bridges form between C442/C455, C449/C464, C466/C478, C484/C497, C491/C506, C508/C519, C523/C533, C527/C539, and C541/C550. N457, T458, and S461 together coordinate Ca(2+). In terms of domain architecture, EGF-like 3; calcium-binding spans 480–520; it reads EHDECASGQHDCDENALCFNTVGGHSCSCKPGYSGNGTVCR. An N-linked (GlcNAc...) asparagine glycan is attached at N515. One can recognise an EGF-like 4 domain in the interval 521–551; it reads ALCDGRCLNGGSCASPNVCVCVQGFSGQNCE. Ca(2+) contacts are provided by D553, I554, and E556. The EGF-like 5; calcium-binding domain maps to 553–592; that stretch reads DIDECSEGLVQCAAHATCVNLPGWYHCECRDGYHDNEVFS. Cystine bridges form between C557-C570, C564-C579, and C581-C598. 3 residues coordinate Ca(2+): N572, L573, and W576. Ca(2+)-binding residues include D600, I601, and E603. The EGF-like 6; calcium-binding domain occupies 600–635; sequence DIDECRTGRSTCANDTVCFNLDGGFDCRCPHGHNCS. 3 disulfides stabilise this stretch: C604/C617, C611/C626, and C628/C634. An N-linked (GlcNAc...) asparagine glycan is attached at N613. Ca(2+) contacts are provided by N619, L620, and G623. The N-linked (GlcNAc...) asparagine glycan is linked to N633. VWFC domains lie at 636–691 and 696–754; these read GDCI…PECD and SQCL…PRCV.

Homotrimer.

It localises to the secreted. Its function is as follows. May regulate neuronal differentiation, polarization and axon guidance. The protein is Protein kinase C-binding protein NELL2a (nell2a) of Danio rerio (Zebrafish).